Consider the following 131-residue polypeptide: Small ribosomal subunit protein uS8 (131 aa).

This sequence belongs to the universal ribosomal protein uS8 family. As to quaternary structure, part of the 30S ribosomal subunit. Contacts proteins S5 and S12.

One of the primary rRNA binding proteins, it binds directly to 16S rRNA central domain where it helps coordinate assembly of the platform of the 30S subunit. The polypeptide is Small ribosomal subunit protein uS8 (Acidovorax sp. (strain JS42)).